The sequence spans 368 residues: tRNA-specific 2-thiouridylase MnmA (368 aa).

ATP-binding positions include 12-19 and M38; that span reads AMSGGVDS. The active-site Nucleophile is the C110. The cysteines at positions 110 and 207 are disulfide-linked. ATP is bound at residue G134. Residues 157 to 159 form an interaction with tRNA region; that stretch reads KDQ. C207 functions as the Cysteine persulfide intermediate in the catalytic mechanism. Positions 312–313 are interaction with tRNA; it reads RY.

The protein belongs to the MnmA/TRMU family.

It is found in the cytoplasm. The enzyme catalyses S-sulfanyl-L-cysteinyl-[protein] + uridine(34) in tRNA + AH2 + ATP = 2-thiouridine(34) in tRNA + L-cysteinyl-[protein] + A + AMP + diphosphate + H(+). In terms of biological role, catalyzes the 2-thiolation of uridine at the wobble position (U34) of tRNA, leading to the formation of s(2)U34. The protein is tRNA-specific 2-thiouridylase MnmA of Geobacter metallireducens (strain ATCC 53774 / DSM 7210 / GS-15).